Consider the following 613-residue polypeptide: MLEKEGKLIMSREDEEIMAWFERTTRDAADVQRETLRRILAENAGVEYLRELGLAGLTDAGSFRARVPVVTHADLDPYIQRVADGDASPVLTAKPVTAISLSSGTTQGKRKRLLFNDDLLRSSIRFFHASYAFTNRAFPVEDGRVLQFMYGSRHETTKGGLTATTVMTNLLRSEEFTASMAARSRPRLPSCSPSEVVFSPDFDESLYCHLLCGLLLAGEVRAVSASFAHSIVVALQALERVWRELCADIRRGAASPARVTTPAVRRAVAPILAAPNPALADALERRCAALGDWSGVIPALWPNARYVQATMTGSMEHYVKKLRHYAGGVPLVSGNYASSEGVIGINAEQHAPPESVVFTVLPDAAYFEFIPLKPPCTDAAADDDNPAAAGSSCYVDADDANPVGLTDVVVGEHYEVVMTTFTGLYRYRLGDVVKVAGFHHATPKLRFVCRRSLILSINVDKNSEHDLQLAVDSAAKILAGDGENHKQLEIADYTSHADTSSDPGHYVVFWELNGGGEEDGGGVLQRCCDEMDRAFGADAGYAQSRKTCAIGALELRVLRRGAFQEVLRHYVAGGSSAGQFKMPRCVAPSNAGVLRVLKDNTINIFFSTAYDYD.

It belongs to the IAA-amido conjugating enzyme family. Expressed in roots.

May catalyze the synthesis of indole-3-acetic acid (IAA)-amino acid conjugates, providing a mechanism for the plant to cope with the presence of excess auxin. The sequence is that of Probable indole-3-acetic acid-amido synthetase GH3.12 (GH3.12) from Oryza sativa subsp. japonica (Rice).